A 263-amino-acid polypeptide reads, in one-letter code: MLLAWVQAFLVSNMLLAEAYGSGGCFWDNGHLYREDQTSPAPGLRCLNWLDAQSGLASAPVSGAGNHSYCRNPDEDPRGPWCYVSGEAGVPEKRPCENLSCPETTSQALPASTTEIEEASEGPGADEVQVFAPANALPARSEAAAVQPVIGISQRVRMNSKEKKDLGTLGYVLGITMMVIIVAIGAGIILGYSYKRGKDLKEQHDQKVCEREMQRITLPLSAFTNPTCEIVDEKTVVVHTSQTPVDPQEGSTPLMGQAGTPGA.

A signal peptide spans 1–21; that stretch reads MLLAWVQAFLVSNMLLAEAYG. Over 22 to 168 the chain is Extracellular; sequence SGGCFWDNGH…NSKEKKDLGT (147 aa). Residues 24–101 enclose the Kringle domain; it reads GCFWDNGHLY…EKRPCENLSC (78 aa). Cystine bridges form between Cys25–Cys101, Cys46–Cys82, and Cys70–Cys96. Asn98 carries an N-linked (GlcNAc...) asparagine glycan. The chain crosses the membrane as a helical span at residues 169–189; that stretch reads LGYVLGITMMVIIVAIGAGII. Residues 190–263 lie on the Cytoplasmic side of the membrane; it reads LGYSYKRGKD…LMGQAGTPGA (74 aa). The span at 242–251 shows a compositional bias: polar residues; sequence QTPVDPQEGS. Positions 242–263 are disordered; that stretch reads QTPVDPQEGSTPLMGQAGTPGA.

The protein resides in the cell membrane. Negative regulator of hepatic phosphatidylinositol 3-kinase (PI3K) activity. The protein is Phosphoinositide-3-kinase-interacting protein 1 (PIK3IP1) of Pongo abelii (Sumatran orangutan).